A 247-amino-acid chain; its full sequence is Malonyl-[acyl-carrier protein] O-methyltransferase (247 aa).

It belongs to the methyltransferase superfamily.

The enzyme catalyses malonyl-[ACP] + S-adenosyl-L-methionine = malonyl-[ACP] methyl ester + S-adenosyl-L-homocysteine. It participates in cofactor biosynthesis; biotin biosynthesis. Its function is as follows. Converts the free carboxyl group of a malonyl-thioester to its methyl ester by transfer of a methyl group from S-adenosyl-L-methionine (SAM). It allows to synthesize pimeloyl-ACP via the fatty acid synthetic pathway. The chain is Malonyl-[acyl-carrier protein] O-methyltransferase from Buchnera aphidicola subsp. Baizongia pistaciae (strain Bp).